The sequence spans 499 residues: PQIVNDGVTVAREVELEDPVENIGAKLVRQAAAKTNDLAGDGTTTSVVLAQGLIAEGVKVIAAGANPVQITRGIEKTAKALVLELKKMSKEVEDSELADVAAVSAGNNYEIGNMIAEAMSKVGRKGVVTLEEGRSSENNLYVVEGMQFERGYISPYFVTDSEKMTTEYENCKLLLVDKKITNARDLINVLEEAIRGQYPILIIAEDIEQEALATLVVNKLRGSLKICAIKAPGFGERKTQYLDDIAILTGGTVIRDEVGLTLDKADNTVLGTAAKVVLTKESTTIVGDGSTQEEVTKRVAQIKNLIEAAEQDYEKEKLNERIAKLAGGVAVIQVGAQTETELKEKKLRVEDALNATKAAVEEGIVVGGGCTLLRLAAKVDAIKDTLENDEQKVGAEIVRRALCYPLKLIAKNAGVNGSVVTEKVLSNDNFKFGYNAATGQYEDLMAAGIIDPTKVVRCCLEHAASVAKTFLTSDVVVVEIKEPEAAPLANPMDNSGFGY.

Belongs to the chaperonin (HSP60) family. Oligomer of probably six alpha and six beta subunits.

The protein localises to the plastid. It localises to the chloroplast. In terms of biological role, this protein binds RuBisCO small and large subunits and is implicated in the assembly of the enzyme oligomer. The polypeptide is RuBisCO large subunit-binding protein subunit beta, chloroplastic (CPN60) (Secale cereale (Rye)).